The sequence spans 523 residues: Katanin p60 ATPase-containing subunit A1 (523 aa).

Positions 82–215 (KEAPTGRRAA…DGKSKRGLYE (134 aa)) are disordered. Over residues 178 to 194 (AGARSSTAGKKGAASKS) the composition is skewed to low complexity. ATP is bound at residue 279–286 (GPPGTGKT).

The protein belongs to the AAA ATPase family. Katanin p60 subunit A1 subfamily. In terms of assembly, may homooligomerize. Component of KTN80-KTN1 complexes composed of a hexamer of KTN1-KTN80 heterodimers that sense microtubule (MT) geometry to confer precise MT severing. Interacts directly with KTN80.1, KTN80.2, KTN80.3 and KTN80.4. Can interact with KTN80.1. May interact with the kinesin related protein KIN14A. Interacts with microtubule polymers. Binds to IPGA1. In terms of tissue distribution, expressed ubiquitously, including siliques, flowers, leaves, stems and roots.

The protein resides in the cytoplasm. It is found in the cytoskeleton. The catalysed reaction is n ATP + n H2O + a microtubule = n ADP + n phosphate + (n+1) alpha/beta tubulin heterodimers.. Functionally, severs microtubules in vitro in an ATP-dependent manner. Required for oligomerization of functional KTN80-KTN1 complexes that catalyze microtubule severing. This activity may promote rapid reorganization of cellular microtubule arrays. May be required for reorientation of cortical microtubule arrays during cellular elongation. Failure to correctly orient these arrays drastically compromises fiber length, cell wall thickness and mechanical strength. May also be required for the spatial organization of developmental cues within the root. Involved in the IPGA1- and AN-dependent regulation of pavement cells morphogenesis leading to puzzle shape. The polypeptide is Katanin p60 ATPase-containing subunit A1 (Arabidopsis thaliana (Mouse-ear cress)).